The sequence spans 565 residues: MKQEQVRMAVLLMLNCFVKATAPPPWPPSASSASFLDDLGDLGIAPLIRADEAGTARASADFGNLSVAGVGAPRLAAAAAVLYPSRPADIAALLRASCARPAPFAVSARGCGHSVHGQASAPDGVVVDMASLGRLQGGGARRLAVSVEGRYVDAGGEQLWVDVLRASMAHGLTPVSWTDYLHLTVGGTLSNAGISGQAFRHGPQISNVLELDVITGVGEMVTCSKEKAPDLFDAVLGGLGQFGVITRARIPLAPAPARARWVRFVYTTAAAMTADQERLIAVDRAGGAGAVGGLMDYVEGSVHLNQGLVETWRTQPQPPSPSSSSSSSFFSDADEARVAALAKEAGGVLYFLEGAIYFGGAAGPSAADVDKRMDVLRRELRHERGFVFAQDVAYAGFLDRVHDGELKLRAAGLWDVPHPWLNLFLPRSGVLAFADGVFHGILSRTPAMGPVLIYPMNRNKWDSNMSAVITDDDGDEVFYTVGILRSAAAAGDVGRLEEQNDEILGFCEVAGIAYKQYLPYYGSQAEWQKRHFGANLWPRFVQRKSKYDPKAILSRGQGIFTSPLA.

An N-terminal signal peptide occupies residues Met-1–Ala-20. Asn-64 carries an N-linked (GlcNAc...) asparagine glycan. Residues Arg-74–Ala-255 form the FAD-binding PCMH-type domain. The FAD site is built by Ala-108, Gly-110, and Gly-112. His-113 carries the pros-8alpha-FAD histidine modification. Positions 114, 118, 179, 184, 190, 194, and 245 each coordinate FAD. Residue Asn-464 is glycosylated (N-linked (GlcNAc...) asparagine). 3 residues coordinate FAD: Tyr-517, Ser-554, and Gln-557.

The protein belongs to the oxygen-dependent FAD-linked oxidoreductase family. Monomer. FAD serves as cofactor. In terms of processing, glycosylated. Mostly expressed in leaves, culms, inflorescence meristems, and flowers, especially in vascular tissues.

It localises to the secreted. Its subcellular location is the extracellular space. It catalyses the reaction N(6)-dimethylallyladenine + A + H2O = 3-methyl-2-butenal + adenine + AH2. In terms of biological role, catalyzes the oxidation of cytokinins, a family of N(6)-substituted adenine derivatives that are plant hormones, where the substituent is an isopentenyl group. Is a major QTL involved in grain yield. Modulates the number of reproductive organs by regulating the cytokinin accumulation in inflorescence meristems. Acts as negative regulator of panicle branching. The protein is Cytokinin dehydrogenase 2 of Oryza sativa subsp. japonica (Rice).